Consider the following 359-residue polypeptide: MMP endo-(1,4)-3-O-methyl-alpha-D-mannosidase (359 aa).

In terms of assembly, monomer in solution.

It catalyses the reaction Endohydrolysis of 3-O-methyl-alpha-D-mannosyl-(1-&gt;4)-3-O-methyl-D-mannose linkages within (1,4)-3-O-methyl-alpha-D-mannnan substrates.. Its function is as follows. Hydrolase involved in the biosynthesis of 3-O-methylmannose polysaccharides (MMP), which are intracellular polymethylated polysaccharides implicated in the modulation of fatty acid metabolism in non-tuberculous mycobacteria. Highly specific hydrolase that catalyzes the internal cleavage of MMP. Is able to hydrolyze purified MMP into distinct lower order oligomannosides but does not cleave acylated or deacylated forms of 6-O-methylglucose lipopolysaccharide (MGLP), beta-mannans, synthetic 4alpha-oligomannosides or its own reaction products. Products were identified as four distinct oligomannosides differing in the number of mannose units (4 to 8) and methylation pattern (free or methylated C1-OH). Might serve as a recycling enzyme that hydrolyzes mature MMP into defined-size smaller oligomannosides that are, in turn, substrates for ManT and MeT1 activities for further processing into new daughter MMP chains. The polypeptide is MMP endo-(1,4)-3-O-methyl-alpha-D-mannosidase (Mycolicibacterium hassiacum (strain DSM 44199 / CIP 105218 / JCM 12690 / 3849) (Mycobacterium hassiacum)).